Here is a 142-residue protein sequence, read N- to C-terminus: Large ribosomal subunit protein uL11 (142 aa).

Belongs to the universal ribosomal protein uL11 family. Part of the ribosomal stalk of the 50S ribosomal subunit. Interacts with L10 and the large rRNA to form the base of the stalk. L10 forms an elongated spine to which L12 dimers bind in a sequential fashion forming a multimeric L10(L12)X complex. Post-translationally, one or more lysine residues are methylated.

Functionally, forms part of the ribosomal stalk which helps the ribosome interact with GTP-bound translation factors. The polypeptide is Large ribosomal subunit protein uL11 (Maricaulis maris (strain MCS10) (Caulobacter maris)).